The following is a 70-amino-acid chain: Protein SlyX homolog (70 aa).

The protein belongs to the SlyX family.

This chain is Protein SlyX homolog, found in Shewanella woodyi (strain ATCC 51908 / MS32).